The following is a 956-amino-acid chain: Golgin candidate 5 (956 aa).

2 disordered regions span residues 70–230 and 278–298; these read MSFM…QHKI and IFES…SSDE. Basic and acidic residues-rich tracts occupy residues 77–89 and 118–129; these read SDEK…DSVR and ANKETNVRREAD. 2 stretches are compositionally biased toward polar residues: residues 160-177 and 184-193; these read EYSL…SLQP and TASQDSQPEQ. The segment covering 206-219 has biased composition (basic and acidic residues); the sequence is SEAKEVTVENKDTV. Residues 333–765 are a coiled coil; it reads SDSADVILEL…LIQKDLEREK (433 aa). Serine 793 is modified (phosphoserine). Residues 851 to 951 adopt a coiled-coil conformation; it reads SAYEATLRQK…EMYREQVNML (101 aa).

As to quaternary structure, interacts with RABH1B and RABH1C, but not with RABD1 or RABD2A.

Its subcellular location is the golgi apparatus. The protein localises to the cytoplasm. Golgi matrix protein playing a role in tethering of vesicles to Golgi membranes and in maintaining the overall structure of the Golgi apparatus. The polypeptide is Golgin candidate 5 (GC5) (Arabidopsis thaliana (Mouse-ear cress)).